The sequence spans 182 residues: ATP synthase subunit delta (182 aa).

This sequence belongs to the ATPase delta chain family. As to quaternary structure, F-type ATPases have 2 components, F(1) - the catalytic core - and F(0) - the membrane proton channel. F(1) has five subunits: alpha(3), beta(3), gamma(1), delta(1), epsilon(1). CF(0) has four main subunits: a(1), b(1), b'(1) and c(10-14). The alpha and beta chains form an alternating ring which encloses part of the gamma chain. F(1) is attached to F(0) by a central stalk formed by the gamma and epsilon chains, while a peripheral stalk is formed by the delta, b and b' chains.

It is found in the cellular thylakoid membrane. Its function is as follows. F(1)F(0) ATP synthase produces ATP from ADP in the presence of a proton or sodium gradient. F-type ATPases consist of two structural domains, F(1) containing the extramembraneous catalytic core and F(0) containing the membrane proton channel, linked together by a central stalk and a peripheral stalk. During catalysis, ATP synthesis in the catalytic domain of F(1) is coupled via a rotary mechanism of the central stalk subunits to proton translocation. This protein is part of the stalk that links CF(0) to CF(1). It either transmits conformational changes from CF(0) to CF(1) or is implicated in proton conduction. The polypeptide is ATP synthase subunit delta (Synechococcus sp. (strain JA-3-3Ab) (Cyanobacteria bacterium Yellowstone A-Prime)).